A 293-amino-acid polypeptide reads, in one-letter code: Probable metal transport system membrane protein CT_417 (293 aa).

The next 7 helical transmembrane spans lie at 18–38, 41–61, 68–88, 101–121, 135–155, 187–207, and 242–262; these read SLLAAFGASIAAGIIGSYIVV, IVSISGSIAHSILGGVGIALW, LPISPLHGAIASAIFVAICIG, IISMIWSIGMAIGIICISKLP, ILWVTPQDLYFLGILDLFIVA, LLLILTAITTVVLMYVMGVIL, and FLGIMLAYLLDLPVGPVIAIL.

It belongs to the ABC-3 integral membrane protein family.

It is found in the cell inner membrane. Functionally, part of an ATP-driven transport system CT_415/CT_416/CT_417 for a metal. This Chlamydia trachomatis serovar D (strain ATCC VR-885 / DSM 19411 / UW-3/Cx) protein is Probable metal transport system membrane protein CT_417.